The primary structure comprises 95 residues: Large ribosomal subunit protein uL24c (95 aa).

Belongs to the universal ribosomal protein uL24 family. Part of the 50S ribosomal subunit.

The protein localises to the plastid. Its subcellular location is the chloroplast. Its function is as follows. One of two assembly initiator proteins, it binds directly to the 5'-end of the 23S rRNA, where it nucleates assembly of the 50S subunit. This chain is Large ribosomal subunit protein uL24c (rpl24), found in Porphyra purpurea (Red seaweed).